We begin with the raw amino-acid sequence, 468 residues long: ATP synthase subunit beta (468 aa).

Position 155 to 162 (155 to 162) interacts with ATP; the sequence is GGAGVGKT.

It belongs to the ATPase alpha/beta chains family. As to quaternary structure, F-type ATPases have 2 components, CF(1) - the catalytic core - and CF(0) - the membrane proton channel. CF(1) has five subunits: alpha(3), beta(3), gamma(1), delta(1), epsilon(1). CF(0) has three main subunits: a(1), b(2) and c(9-12). The alpha and beta chains form an alternating ring which encloses part of the gamma chain. CF(1) is attached to CF(0) by a central stalk formed by the gamma and epsilon chains, while a peripheral stalk is formed by the delta and b chains.

It is found in the cell membrane. It catalyses the reaction ATP + H2O + 4 H(+)(in) = ADP + phosphate + 5 H(+)(out). In terms of biological role, produces ATP from ADP in the presence of a proton gradient across the membrane. The catalytic sites are hosted primarily by the beta subunits. In Bacillus cereus (strain ATCC 10987 / NRS 248), this protein is ATP synthase subunit beta.